We begin with the raw amino-acid sequence, 67 residues long: Prokaryotic ubiquitin-like protein Pup (67 aa).

Positions 1–11 (MAGQEQQQPQS) are enriched in low complexity. Residues 1 to 47 (MAGQEQQQPQSRESEFEDDAPATPPAPGEAQASAATQGVDDLLDEID) are disordered. The interval 25–61 (PAPGEAQASAATQGVDDLLDEIDGVLESNAEEFVRAF) is ARC ATPase binding. Gln67 is modified (deamidated glutamine). Residue Gln67 forms an Isoglutamyl lysine isopeptide (Gln-Lys) (interchain with K-? in acceptor proteins) linkage.

Belongs to the prokaryotic ubiquitin-like protein family. Strongly interacts with the proteasome-associated ATPase ARC through a hydrophobic interface; the interacting region of Pup lies in its C-terminal half. There is one Pup binding site per ARC hexamer ring. Is modified by deamidation of its C-terminal glutamine to glutamate by the deamidase Dop, a prerequisite to the subsequent pupylation process.

Its pathway is protein degradation; proteasomal Pup-dependent pathway. In terms of biological role, protein modifier that is covalently attached to lysine residues of substrate proteins, thereby targeting them for proteasomal degradation. The tagging system is termed pupylation. This Arthrobacter sp. (strain FB24) protein is Prokaryotic ubiquitin-like protein Pup.